The following is a 151-amino-acid chain: Methylated-DNA--protein-cysteine methyltransferase (151 aa).

C119 serves as the catalytic Nucleophile; methyl group acceptor.

It belongs to the MGMT family.

Its subcellular location is the cytoplasm. The enzyme catalyses a 6-O-methyl-2'-deoxyguanosine in DNA + L-cysteinyl-[protein] = S-methyl-L-cysteinyl-[protein] + a 2'-deoxyguanosine in DNA. It catalyses the reaction a 4-O-methyl-thymidine in DNA + L-cysteinyl-[protein] = a thymidine in DNA + S-methyl-L-cysteinyl-[protein]. Functionally, involved in the cellular defense against the biological effects of O6-methylguanine (O6-MeG) and O4-methylthymine (O4-MeT) in DNA. Repairs the methylated nucleobase in DNA by stoichiometrically transferring the methyl group to a cysteine residue in the enzyme. This is a suicide reaction: the enzyme is irreversibly inactivated. The sequence is that of Methylated-DNA--protein-cysteine methyltransferase from Saccharolobus islandicus (strain M.16.27) (Sulfolobus islandicus).